We begin with the raw amino-acid sequence, 61 residues long: Large ribosomal subunit protein bL32 (61 aa).

Over residues 1–16 the composition is skewed to basic residues; the sequence is MAVPRRKTSPSRRGMR. The segment at 1–61 is disordered; the sequence is MAVPRRKTSP…RQVLKAKSDS (61 aa). Residues 27–44 show a composition bias toward basic and acidic residues; the sequence is YAEDKDSGELRRPHHLDL.

The protein belongs to the bacterial ribosomal protein bL32 family.

In Nitrobacter winogradskyi (strain ATCC 25391 / DSM 10237 / CIP 104748 / NCIMB 11846 / Nb-255), this protein is Large ribosomal subunit protein bL32.